Here is a 349-residue protein sequence, read N- to C-terminus: Protein Wnt-7b (349 aa).

The first 24 residues, 1-24, serve as a signal peptide directing secretion; sequence MHRNFRKWIFYVFLCFGVIYVKLG. 5 cysteine pairs are disulfide-bonded: C73/C84, C123/C131, C133/C152, C200/C214, and C202/C209. N-linked (GlcNAc...) asparagine glycans are attached at residues N83 and N127. A lipid anchor (O-palmitoleoyl serine; by PORCN) is attached at S206. The interval 238-266 is disordered linker; it reads VEVVRASRLRQPTFLKIKQIKSYQKPMET. 6 disulfides stabilise this stretch: C278–C309, C294–C304, C308–C348, C324–C339, C326–C336, and C331–C332. N295 carries an N-linked (GlcNAc...) asparagine glycan.

The protein belongs to the Wnt family. Post-translationally, palmitoleoylation is required for efficient binding to frizzled receptors. Depalmitoleoylation leads to Wnt signaling pathway inhibition. Expressed in differentiating lens fiber cells.

It localises to the secreted. The protein resides in the extracellular space. It is found in the extracellular matrix. In terms of biological role, ligand for members of the frizzled family of seven transmembrane receptors that functions in the canonical Wnt/beta-catenin signaling pathway. Required for normal fusion of the chorion and the allantois during placenta development. Required for central nervous system (CNS) angiogenesis and blood-brain barrier regulation. This is Protein Wnt-7b (WNT7B) from Gallus gallus (Chicken).